The following is a 166-amino-acid chain: Endoribonuclease YbeY (166 aa).

The Zn(2+) site is built by His111, His115, and His121. Positions 140 to 166 (ELGYPDPYADDESADPPHSDTPSKDHE) are disordered. A compositionally biased stretch (basic and acidic residues) spans 154 to 166 (DPPHSDTPSKDHE).

This sequence belongs to the endoribonuclease YbeY family. Zn(2+) is required as a cofactor.

The protein localises to the cytoplasm. Functionally, single strand-specific metallo-endoribonuclease involved in late-stage 70S ribosome quality control and in maturation of the 3' terminus of the 16S rRNA. In Pseudomonas syringae pv. syringae (strain B728a), this protein is Endoribonuclease YbeY.